The sequence spans 244 residues: Orotidine 5'-phosphate decarboxylase (244 aa).

Residues aspartate 18, lysine 43, 73-82 (DLKLADIGYI), serine 130, 182-192 (PGVGAQGGKPG), glycine 206, and arginine 207 each bind substrate. Residue lysine 75 is the Proton donor of the active site.

The protein belongs to the OMP decarboxylase family. Type 1 subfamily. Homodimer.

It catalyses the reaction orotidine 5'-phosphate + H(+) = UMP + CO2. The protein operates within pyrimidine metabolism; UMP biosynthesis via de novo pathway; UMP from orotate: step 2/2. Functionally, catalyzes the decarboxylation of orotidine 5'-monophosphate (OMP) to uridine 5'-monophosphate (UMP). This is Orotidine 5'-phosphate decarboxylase from Aeropyrum pernix (strain ATCC 700893 / DSM 11879 / JCM 9820 / NBRC 100138 / K1).